We begin with the raw amino-acid sequence, 418 residues long: Probable serine hydroxymethyltransferase (418 aa).

Residues Leu118 and 122-124 contribute to the (6S)-5,6,7,8-tetrahydrofolate site; that span reads GHL. Lys226 bears the N6-(pyridoxal phosphate)lysine mark. 351 to 353 serves as a coordination point for (6S)-5,6,7,8-tetrahydrofolate; it reads SPF.

It belongs to the SHMT family. Homodimer. It depends on pyridoxal 5'-phosphate as a cofactor.

The protein localises to the cytoplasm. The enzyme catalyses (6R)-5,10-methylene-5,6,7,8-tetrahydrofolate + glycine + H2O = (6S)-5,6,7,8-tetrahydrofolate + L-serine. It functions in the pathway one-carbon metabolism; tetrahydrofolate interconversion. Its function is as follows. Catalyzes the reversible interconversion of serine and glycine with tetrahydrofolate (THF) serving as the one-carbon carrier. This reaction serves as the major source of one-carbon groups required for the biosynthesis of purines, thymidylate, methionine, and other important biomolecules. The chain is Probable serine hydroxymethyltransferase from Mesomycoplasma hyopneumoniae (strain 232) (Mycoplasma hyopneumoniae).